We begin with the raw amino-acid sequence, 328 residues long: MPGQYAQSWLDWEAQSGGRSVLHGTPDEIKAMYAGLSQALKPMAPPFSENVDVTEGDVDGIKYRIYKLKGERGPLPIAFNTHGGGWMVGDLDTDHLLCGVIAEHTKSVVVNVDYRLTPDVAYPVPLEDSLKVYKWAAANASSFGGDPDKFYTIGGSAGGALALQIANKIKKDPQLKDGLKGVVALVPATTHWEAVPEKYKSKYKAVEDNKTGVPIIDGESMEIFFKYAKVDPSDPDTFTLLAEDNHKNFPPTYFASCEFDPLRDDAYVMEAALKEAGVPTKHDHYPGMPHYFWLIPTVPESKIFVENLLQGIGWILSQMKGATRSSYI.

Residues 82–84 (HGG) carry the Involved in the stabilization of the negatively charged intermediate by the formation of the oxyanion hole motif. Residues Ser-156, Asp-260, and His-290 contribute to the active site.

This sequence belongs to the 'GDXG' lipolytic enzyme family.

The enzyme catalyses (2S,3S)-versiconal hemiacetal acetate + H2O = (2S-3S)-versiconal hemiacetal + acetate + H(+). It catalyses the reaction (3S)-versiconol acetate + H2O = (S)-versiconol + acetate + H(+). It functions in the pathway mycotoxin biosynthesis. Versiconal hemiacetal acetate esterase; part of the fragmented gene cluster that mediates the biosynthesis of dothistromin (DOTH), a polyketide toxin very similar in structure to the aflatoxin precursor, versicolorin B. The first step of the pathway is the conversion of acetate to norsolorinic acid (NOR) and requires the fatty acid synthase subunits hexA and hexB, as well as the polyketide synthase pksA. PksA combines a hexanoyl starter unit and 7 malonyl-CoA extender units to synthesize the precursor NOR. The hexanoyl starter unit is provided to the acyl-carrier protein (ACP) domain by the fungal fatty acid synthase hexA/hexB. The second step is the conversion of NOR to averantin (AVN) and requires the norsolorinic acid ketoreductase nor1, which catalyzes the dehydration of norsolorinic acid to form (1'S)-averantin. The cytochrome P450 monooxygenase avnA then catalyzes the hydroxylation of AVN to 5'hydroxyaverantin (HAVN). The next step is performed by adhA that transforms HAVN to averufin (AVF). Averufin might then be converted to hydroxyversicolorone by cypX and avfA. Hydroxyversicolorone is further converted versiconal hemiacetal acetate (VHA) by moxY. VHA is then the substrate for the versiconal hemiacetal acetate esterase est1 to yield versiconal (VAL). Versicolorin B synthase vbsA then converts VAL to versicolorin B (VERB) by closing the bisfuran ring. Then, the activity of the versicolorin B desaturase verB leads to versicolorin A (VERA). DotB, a predicted chloroperoxidase, may perform epoxidation of the A-ring of VERA. Alternatively, a cytochrome P450, such as cypX or avnA could catalyze this step. It is also possible that another, uncharacterized, cytochrome P450 enzyme is responsible for this step. Opening of the epoxide could potentially be achieved by the epoxide hydrolase epoA. However, epoA seems not to be required for DOTH biosynthesis, but other epoxide hydrolases may have the ability to complement this hydrolysis. Alternatively, opening of the epoxide ring could be achieved non-enzymatically. The next step is the deoxygenation of ring A to yield the 5,8-dihydroxyanthraquinone which is most likely catalyzed by the NADPH dehydrogenase encoded by ver1. The last stages of DOTH biosynthesis are proposed to involve hydroxylation of the bisfuran. OrdB and norB might have oxidative roles here. An alternative possibility is that cytochrome P450 monoogenases such as avnA and cypX might perform these steps in addition to previously proposed steps. This is Versiconal hemiacetal acetate esterase from Dothistroma septosporum (strain NZE10 / CBS 128990) (Red band needle blight fungus).